The following is a 503-amino-acid chain: Probable cytosol aminopeptidase (503 aa).

Mn(2+) contacts are provided by lysine 270 and aspartate 275. Residue lysine 282 is part of the active site. The Mn(2+) site is built by aspartate 293, aspartate 352, and glutamate 354. Arginine 356 is a catalytic residue.

Belongs to the peptidase M17 family. It depends on Mn(2+) as a cofactor.

It is found in the cytoplasm. The catalysed reaction is Release of an N-terminal amino acid, Xaa-|-Yaa-, in which Xaa is preferably Leu, but may be other amino acids including Pro although not Arg or Lys, and Yaa may be Pro. Amino acid amides and methyl esters are also readily hydrolyzed, but rates on arylamides are exceedingly low.. The enzyme catalyses Release of an N-terminal amino acid, preferentially leucine, but not glutamic or aspartic acids.. Functionally, presumably involved in the processing and regular turnover of intracellular proteins. Catalyzes the removal of unsubstituted N-terminal amino acids from various peptides. The protein is Probable cytosol aminopeptidase of Salmonella agona (strain SL483).